Here is a 268-residue protein sequence, read N- to C-terminus: Protein APE_1980.1 (268 aa).

Belongs to the CinA family.

This Aeropyrum pernix (strain ATCC 700893 / DSM 11879 / JCM 9820 / NBRC 100138 / K1) protein is Protein APE_1980.1.